Reading from the N-terminus, the 222-residue chain is Glutathione S-transferase A1 (222 aa).

Met1 is subject to N-acetylmethionine. Position 2 is an N-acetylalanine; in Glutathione S-transferase A1, N-terminally processed (Ala2). One can recognise a GST N-terminal domain in the interval 3–83 (EKPKLHYFNA…YIASKYNLYG (81 aa)). The residue at position 4 (Lys4) is an N6-succinyllysine. Glutathione-binding positions include Tyr9, Arg45, 54 to 55 (QV), and 67 to 68 (QT). In terms of domain architecture, GST C-terminal spans 85–207 (DIKERALIDM…LQPGSPRKPP (123 aa)).

This sequence belongs to the GST superfamily. Alpha family. Homodimer or heterodimer of GSTA1 and GSTA2. In terms of tissue distribution, liver.

It is found in the cytoplasm. It carries out the reaction RX + glutathione = an S-substituted glutathione + a halide anion + H(+). The catalysed reaction is prostaglandin A2 + glutathione = prostaglandin A2-S-(R)-glutathione. It catalyses the reaction prostaglandin J2 + glutathione = prostaglandin J2-S-(R)-glutathione. The enzyme catalyses (13S)-hydroperoxy-(9Z,11E)-octadecadienoate + 2 glutathione = (13S)-hydroxy-(9Z,11E)-octadecadienoate + glutathione disulfide + H2O. It carries out the reaction androst-5-ene-3,17-dione = androst-4-ene-3,17-dione. Its activity is regulated as follows. The isomerase activity is inhibited by S-methylglutathione (GSMe). Its function is as follows. Glutathione S-transferase that catalyzes the nucleophilic attack of the sulfur atom of glutathione on the electrophilic groups of a wide range of exogenous and endogenous compounds. Involved in the formation of glutathione conjugates of both prostaglandin A2 (PGA2) and prostaglandin J2 (PGJ2). It also catalyzes the isomerization of D5-androstene-3,17-dione (AD) into D4-androstene-3,17-dione and may therefore play an important role in hormone biosynthesis. Through its glutathione-dependent peroxidase activity toward the fatty acid hydroperoxide (13S)-hydroperoxy-(9Z,11E)-octadecadienoate/13-HPODE it is also involved in the metabolism of oxidized linoleic acid. The polypeptide is Glutathione S-transferase A1 (GSTA1) (Homo sapiens (Human)).